The primary structure comprises 660 residues: Iron(3+)-hydroxamate import system permease protein FhuB (660 aa).

18 helical membrane-spanning segments follow: residues 5–25, 62–82, 93–113, 118–138, 147–167, 197–217, 240–260, 277–297, 303–323, 348–368, 391–411, 424–444, 447–467, 479–499, 528–548, 567–587, 607–627, and 635–655; these read IALF…ALTW, LAIS…FQQV, LGVA…AIPG, QFAA…VAWG, ILAG…LVIF, QLLG…LMGL, AIVI…IGLF, LMLA…IILW, MEVS…LWLL, LAFA…ALSF, WPRI…GCII, VLGI…LVPG, FGWL…IIMI, MLLA…MLQA, GIVM…LTIL, IALL…IGPL, MPHI…ADWC, and FQIP…IYLL.

This sequence belongs to the binding-protein-dependent transport system permease family. FecCD subfamily. In terms of assembly, the complex is composed of two ATP-binding proteins (FhuC), a transmembrane protein (FhuB) and a solute-binding protein (FhuD). FhuB interacts with FhuC. FhuB interacts with FhuD. FhuB binds substrate-loaded FhuD more strongly than FhuD alone.

It localises to the cell inner membrane. In terms of biological role, part of the ABC transporter complex FhuCDB involved in iron(3+)-hydroxamate import. Responsible for the translocation of the substrate across the membrane. This Escherichia coli (strain K12) protein is Iron(3+)-hydroxamate import system permease protein FhuB (fhuB).